The following is a 112-amino-acid chain: Iron-sulfur cluster assembly protein CyaY (112 aa).

It belongs to the frataxin family.

Its function is as follows. Involved in iron-sulfur (Fe-S) cluster assembly. May act as a regulator of Fe-S biogenesis. This Janthinobacterium sp. (strain Marseille) (Minibacterium massiliensis) protein is Iron-sulfur cluster assembly protein CyaY.